An 87-amino-acid chain; its full sequence is U3-theraphotoxin-Hhn1a 16 (87 aa).

The signal sequence occupies residues 1 to 24; sequence MVNMKASMFLTFAGLVLLFVVCYA. Residues 25-52 constitute a propeptide that is removed on maturation; the sequence is SESEEKEFPKEMLSSIFAVDNDFKQGER. 3 disulfide bridges follow: C54/C67, C61/C72, and C66/C79.

The protein belongs to the neurotoxin 10 (Hwtx-1) family. 51 (Hntx-8) subfamily. Hntx-8 sub-subfamily. In terms of tissue distribution, expressed by the venom gland.

The protein resides in the secreted. Its function is as follows. Ion channel inhibitor. In Cyriopagopus hainanus (Chinese bird spider), this protein is U3-theraphotoxin-Hhn1a 16.